Reading from the N-terminus, the 197-residue chain is MPKVGMQPIRRQQLIEATLQAVDQVGMGDASIALIARLAGVSNGIISHYFQDKNGLIAATMRYLMSVLSENVTARRQALADSSPRAHLQVIIEGNFDASQVNGPAMKTWLAFWATSMHQPSLHRLQRINDHRLYSNLCCEFRRVLPLEDARTAARGLAALIDGLWLRGALSGDAFDTAQAQQIAYEYMDFQLAKQVS.

An HTH tetR-type domain is found at 8 to 68 (PIRRQQLIEA…ATMRYLMSVL (61 aa)). The H-T-H motif DNA-binding region spans 31–50 (SIALIARLAGVSNGIISHYF).

Its pathway is amine and polyamine biosynthesis; betaine biosynthesis via choline pathway [regulation]. Functionally, repressor involved in the biosynthesis of the osmoprotectant glycine betaine. It represses transcription of the choline transporter BetT and the genes of BetAB involved in the synthesis of glycine betaine. In Pseudomonas fluorescens (strain Pf0-1), this protein is HTH-type transcriptional regulator BetI.